A 96-amino-acid chain; its full sequence is UPF0251 protein Spea_3639 (96 aa).

Belongs to the UPF0251 family.

In Shewanella pealeana (strain ATCC 700345 / ANG-SQ1), this protein is UPF0251 protein Spea_3639.